The chain runs to 747 residues: Phenylalanine ammonia-lyase 2 (747 aa).

The segment covering 1–20 has biased composition (polar residues); it reads MTILSGTTAAPRVNGTTMNG. The segment at 1–47 is disordered; sequence MTILSGTTAAPRVNGTTMNGHSKPHTNGVHLNGHAPKATTESPWPQS. Tyr-124 (proton donor/acceptor) is an active-site residue. Positions 229–231 form a cross-link, 5-imidazolinone (Ala-Gly); the sequence is ASG. Ser-230 is subject to 2,3-didehydroalanine (Ser). Asn-290, Gln-380, Arg-386, Asn-416, Lys-487, Glu-515, and Asn-518 together coordinate (E)-cinnamate.

This sequence belongs to the PAL/histidase family. Homotetramer. Contains an active site 4-methylidene-imidazol-5-one (MIO), which is formed autocatalytically by cyclization and dehydration of residues Ala-Ser-Gly.

The protein localises to the cytoplasm. The catalysed reaction is L-phenylalanine = (E)-cinnamate + NH4(+). The protein operates within phenylpropanoid metabolism; trans-cinnamate biosynthesis; trans-cinnamate from L-phenylalanine: step 1/1. Its function is as follows. Catalyzes the non-oxidative deamination of L-phenylalanine to form trans-cinnamic acid and a free ammonium ion. Facilitates the commitment step in phenylpropanoid pathways that produce secondary metabolites such as lignins, coumarins and flavonoids. This Pleurotus ostreatus (Oyster mushroom) protein is Phenylalanine ammonia-lyase 2.